A 242-amino-acid polypeptide reads, in one-letter code: Ribonuclease 3 (242 aa).

The RNase III domain occupies 12 to 139 (ANELLEALGT…LIGATFLEHG (128 aa)). Glutamate 51 lines the Mg(2+) pocket. The active site involves aspartate 55. Positions 125 and 128 each coordinate Mg(2+). Glutamate 128 is an active-site residue. Residues 165 to 236 (LDWKTSLTVK…AEAGWKSLDS (72 aa)) enclose the DRBM domain.

The protein belongs to the ribonuclease III family. Homodimer. Mg(2+) serves as cofactor.

It is found in the cytoplasm. The catalysed reaction is Endonucleolytic cleavage to 5'-phosphomonoester.. Functionally, digests double-stranded RNA. Involved in the processing of primary rRNA transcript to yield the immediate precursors to the large and small rRNAs (23S and 16S). Processes some mRNAs, and tRNAs when they are encoded in the rRNA operon. Processes pre-crRNA and tracrRNA of type II CRISPR loci if present in the organism. This chain is Ribonuclease 3, found in Bifidobacterium longum (strain NCC 2705).